The primary structure comprises 330 residues: Diacylglycerol acyltransferase/mycolyltransferase Ag85A (330 aa).

Positions 1–42 are cleaved as a signal peptide; the sequence is MKFVDRFRGAVAGMLRRLVVEAMGVALLSALIGVVGSAPAEA. Residue 84 to 85 coordinates substrate; that stretch reads LR. Residues 100–110 are fibronectin-binding; it reads FEWYYQSGISV. A disulfide bond links C129 and C134. S168 and D196 together coordinate substrate. The Nucleophile role is filled by S168. The active site involves E272. Substrate contacts are provided by residues 274 to 277, K281, and 304 to 306; these read LVRT and HSW. Residue H304 is part of the active site.

Belongs to the mycobacterial A85 antigen family. As to quaternary structure, homodimer.

It is found in the secreted. It localises to the cell wall. Its subcellular location is the cytoplasm. The enzyme catalyses an acyl-CoA + a 1,2-diacyl-sn-glycerol = a triacyl-sn-glycerol + CoA. The catalysed reaction is 2 alpha,alpha'-trehalose 6-mycolate = alpha,alpha'-trehalose 6,6'-bismycolate + alpha,alpha-trehalose. Its function is as follows. The antigen 85 proteins (FbpA, FbpB, FbpC) are responsible for the high affinity of mycobacteria for fibronectin, a large adhesive glycoprotein, which facilitates the attachment of M.tuberculosis to murine alveolar macrophages (AMs). They also help to maintain the integrity of the cell wall by catalyzing the transfer of mycolic acids to cell wall arabinogalactan, and through the synthesis of alpha,alpha-trehalose dimycolate (TDM, cord factor). They catalyze the transfer of a mycoloyl residue from one molecule of alpha,alpha-trehalose monomycolate (TMM) to another TMM, leading to the formation of TDM. FbpA mediates triacylglycerol (TAG) formation with long-chain acyl-CoA as the acyl donor and 1,2-dipalmitoyl-sn-glycerol (1,2-dipalmitin) as the acyl acceptor. It has a preference for C26:0-CoA over C18:1-CoA. This chain is Diacylglycerol acyltransferase/mycolyltransferase Ag85A (fbpA), found in Mycobacterium leprae (strain TN).